The chain runs to 358 residues: Fructose-bisphosphate aldolase 3, cytoplasmic (358 aa).

Residue Arg39 participates in substrate binding. Glu183 (proton acceptor) is an active-site residue. Residue Lys225 is the Schiff-base intermediate with dihydroxyacetone-P of the active site. Substrate-binding positions include 266–268 (SGG) and Arg298.

The protein belongs to the class I fructose-bisphosphate aldolase family. In terms of assembly, homotetramer.

It localises to the cytoplasm. The protein localises to the cytosol. It carries out the reaction beta-D-fructose 1,6-bisphosphate = D-glyceraldehyde 3-phosphate + dihydroxyacetone phosphate. It functions in the pathway carbohydrate degradation; glycolysis; D-glyceraldehyde 3-phosphate and glycerone phosphate from D-glucose: step 4/4. Fructose-bisphosphate aldolase that plays a key role in glycolysis and gluconeogenesis. The sequence is that of Fructose-bisphosphate aldolase 3, cytoplasmic from Oryza sativa subsp. japonica (Rice).